We begin with the raw amino-acid sequence, 218 residues long: MANKMVGKGKLPVESEDAQKLRFQAELEFVQCLANPNYLHFLAQRGFFKDSNFINYLKYLLHWKDPEMAKYLKYPMCLYFLDLLQYEHFRREIVNAQCCKFIDDQAILLWQHYTRRRTRLTSLGTTSLTGLAVGGQPVGGGVQGPLLSNEPLPMANNNNNTNSTNANNPQAPGQQQQQNGAPMIQQNGLSNNTGMSGGVMGSGARDGGGVNLSGQKVS.

The tract at residues 142–218 (VQGPLLSNEP…GVNLSGQKVS (77 aa)) is disordered. Positions 155–187 (ANNNNNTNSTNANNPQAPGQQQQQNGAPMIQQN) are enriched in low complexity. Gly residues predominate over residues 195 to 211 (MSGGVMGSGARDGGGVN).

This sequence belongs to the Mediator complex subunit 31 family. As to quaternary structure, component of the Mediator complex.

Its subcellular location is the nucleus. Component of the Mediator complex, a coactivator involved in the regulated transcription of nearly all RNA polymerase II-dependent genes. Mediator functions as a bridge to convey information from gene-specific regulatory proteins to the basal RNA polymerase II transcription machinery. Mediator is recruited to promoters by direct interactions with regulatory proteins and serves as a scaffold for the assembly of a functional preinitiation complex with RNA polymerase II and the general transcription factors. This chain is Mediator of RNA polymerase II transcription subunit 31 (MED31), found in Aedes aegypti (Yellowfever mosquito).